The following is a 116-amino-acid chain: T cell receptor alpha variable 38-2/delta variable 8 (116 aa).

The signal sequence occupies residues 1-21 (MACPGFLWALVISTCLEFSMA). Residues 22–116 (QTVTQSQPEM…AAMYFCAYRS (95 aa)) form the Ig-like domain. C43 and C112 form a disulfide bridge. N78 carries N-linked (GlcNAc...) asparagine glycosylation.

Alpha-beta TR is a heterodimer composed of an alpha and beta chain; disulfide-linked. The alpha-beta TR is associated with the transmembrane signaling CD3 coreceptor proteins to form the TR-CD3 (TcR or TCR). The assembly of alpha-beta TR heterodimers with CD3 occurs in the endoplasmic reticulum where a single alpha-beta TR heterodimer associates with one CD3D-CD3E heterodimer, one CD3G-CD3E heterodimer and one CD247 homodimer forming a stable octameric structure. CD3D-CD3E and CD3G-CD3E heterodimers preferentially associate with TR alpha and TR beta chains, respectively. The association of the CD247 homodimer is the last step of TcR assembly in the endoplasmic reticulum and is required for transport to the cell surface.

It localises to the cell membrane. Functionally, v region of the variable domain of T cell receptor (TR) alpha chain that participates in the antigen recognition. Alpha-beta T cell receptors are antigen specific receptors which are essential to the immune response and are present on the cell surface of T lymphocytes. Recognize peptide-major histocompatibility (MH) (pMH) complexes that are displayed by antigen presenting cells (APC), a prerequisite for efficient T cell adaptive immunity against pathogens. Binding of alpha-beta TR to pMH complex initiates TR-CD3 clustering on the cell surface and intracellular activation of LCK that phosphorylates the ITAM motifs of CD3G, CD3D, CD3E and CD247 enabling the recruitment of ZAP70. In turn ZAP70 phosphorylates LAT, which recruits numerous signaling molecules to form the LAT signalosome. The LAT signalosome propagates signal branching to three major signaling pathways, the calcium, the mitogen-activated protein kinase (MAPK) kinase and the nuclear factor NF-kappa-B (NF-kB) pathways, leading to the mobilization of transcription factors that are critical for gene expression and essential for T cell growth and differentiation. The T cell repertoire is generated in the thymus, by V-(D)-J rearrangement. This repertoire is then shaped by intrathymic selection events to generate a peripheral T cell pool of self-MH restricted, non-autoaggressive T cells. Post-thymic interaction of alpha-beta TR with the pMH complexes shapes TR structural and functional avidity. The protein is T cell receptor alpha variable 38-2/delta variable 8 of Homo sapiens (Human).